The following is a 1345-amino-acid chain: MLDVNAFDKIRIGLATADDIRGWSHGEVKKPETINYRTLKPEKDGLFGEQIFGPTRDWECACGKYKRVRFKGIVCERCGVEVTRSRVRRERMGHIELAAPVTHIWFFKGVPSRLGYLLNVTPKDLERVIYFASYMVTEVNEDERHNDLPGLQDEFDSEIKRLEQRRDSDIEARAKKVEEDLAALEEAGEAKGPARTKLRNGAERDMAAIRTRYNDQIARVDAVFDKFKKLKPGDMVDDVDLWREMQDRYGDYFDGCMGAEAIKKRLQSLDLETISKELREEIKDASEQRKTKALKRLKVVNAFLTTGNKPEAMVLDVIPVIPPDLRPMVQLDGGRFATSDLNDLYRRVINRNNRLKRLIELGAPEIMLNNEKRMLQEAVDSLFDNGRRGRPVTGASNRPLKSLSDMLKGKQGRFRQNLLGKRVDYSGRSVIVVGPSLRMHQCGLPKPMALELFKPFVIKRLVDLNYAQNMKSAKRLVDRGDAEVWGVLEEVISEHPVLLNRAPTLHRLGIQAFEPILVEGKAIHLPPLACAAFNADFDGDQMAVHLPLSAEAQAEARSLMMASDNILKPADGHTVTMPSQDMILGLYYLSTVLEGVKGQGRVFSSLEEAEMALDRHEIDMQAKVLIRLPESFVLPKNWEPGEVKVLDPREGEDEVVKEERFHDGTVLFATSYGRILFNETLPTDYPFVNEQVAKGRLSKIVDDIAMRYSTQQVAATLDALKDLGFTRAPWSGVSFAFSDVNEPPERDEKIAEYEAKADKVNANYEMGLLTEEARRQELIDLWTECTAEVSKEVEEKFDPTSNLAIIVQSGARGNMMQINQIAGMRGLVANPKGEIIPRPVKSNYRDGLSVLEYFISQHGARKGLADTALRTAESGYLTRRLVDVSQDVIVREEDCGTKAGLPIRVAERDNDGNLVLVKAADGGPYSRLLAADVIDPADGQTVLYKRDDALSMDVLNDLVAHGVEEVKCRSVLTCESKRGVCAKCYGWSLATNKLVDVGETVGIVAAQSIGEPGTQLTLRSFHSGGVAAASDITQGLPRVTELFEARTPKGEAPITEFAGSIKIVENDRGRQIILTPDADSGAPKEDGVIKPITYQVSKRVPLKVADGDHIKVGTQLVEGSVDPKKILTILGKRAAQVNIVEEVHTVYRSQGVDIHDKHIEVIVHQMTRRVTIIDSGDTDLLPGELVDNARFREINRNIVKNGGRPAVGRPALMGITKASLATDSWLSAASFQETTRVLTEAALSEKVDDLKGLKENVIIGKLIPAGTGLARYRNAVVEPDKAIRDTIYPNFGLGGDGDLGDASFSDADLSDLNFSNLEFGDLKLGDDFNPDDFYSDQGGQPDIEE.

The Zn(2+) site is built by cysteine 60, cysteine 62, cysteine 75, and cysteine 78. Residues aspartate 536, aspartate 538, and aspartate 540 each coordinate Mg(2+). Residues cysteine 895, cysteine 974, cysteine 981, and cysteine 984 each coordinate Zn(2+).

Belongs to the RNA polymerase beta' chain family. In terms of assembly, the RNAP catalytic core consists of 2 alpha, 1 beta, 1 beta' and 1 omega subunit. When a sigma factor is associated with the core the holoenzyme is formed, which can initiate transcription. Mg(2+) serves as cofactor. It depends on Zn(2+) as a cofactor.

The enzyme catalyses RNA(n) + a ribonucleoside 5'-triphosphate = RNA(n+1) + diphosphate. In terms of biological role, DNA-dependent RNA polymerase catalyzes the transcription of DNA into RNA using the four ribonucleoside triphosphates as substrates. This Bifidobacterium longum (strain DJO10A) protein is DNA-directed RNA polymerase subunit beta'.